The sequence spans 219 residues: Ion-translocating oxidoreductase complex subunit G (219 aa).

The chain crosses the membrane as a helical span at residues 25–45; it reads GLLLGLFSLVSALMLALASDA. T187 carries the post-translational modification FMN phosphoryl threonine.

It belongs to the RnfG family. In terms of assembly, the complex is composed of six subunits: RnfA, RnfB, RnfC, RnfD, RnfE and RnfG. Requires FMN as cofactor.

The protein localises to the cellular chromatophore membrane. Part of a membrane-bound complex that couples electron transfer with translocation of ions across the membrane. In Cereibacter sphaeroides (strain ATCC 17023 / DSM 158 / JCM 6121 / CCUG 31486 / LMG 2827 / NBRC 12203 / NCIMB 8253 / ATH 2.4.1.) (Rhodobacter sphaeroides), this protein is Ion-translocating oxidoreductase complex subunit G.